The primary structure comprises 559 residues: Formate--tetrahydrofolate ligase (559 aa).

68–75 contributes to the ATP binding site; it reads TPAGEGKT.

Belongs to the formate--tetrahydrofolate ligase family.

The enzyme catalyses (6S)-5,6,7,8-tetrahydrofolate + formate + ATP = (6R)-10-formyltetrahydrofolate + ADP + phosphate. Its pathway is one-carbon metabolism; tetrahydrofolate interconversion. The protein is Formate--tetrahydrofolate ligase of Rhizobium etli (strain ATCC 51251 / DSM 11541 / JCM 21823 / NBRC 15573 / CFN 42).